A 517-amino-acid polypeptide reads, in one-letter code: Recombining binding protein suppressor of hairless-like protein (517 aa).

Residues 26 to 37 (EMQLQSEADRRS) show a composition bias toward basic and acidic residues. The interval 26-48 (EMQLQSEADRRSLPGTWTRSSPE) is disordered. DNA-binding stretches follow at residues 78 to 88 (QKSYGNEKRFF), 193 to 198 (SKPSQK), and 220 to 225 (RLRSQT). The 126-residue stretch at 387–512 (LISTLELSGG…HQEFTRTNFH (126 aa)) folds into the IPT/TIG domain.

This sequence belongs to the Su(H) family. As to quaternary structure, interacts weakly with EBNA2. Does not interact with any Notch proteins.

It localises to the nucleus. In terms of biological role, putative transcription factor, which cooperates with EBNA2 to activate transcription. This chain is Recombining binding protein suppressor of hairless-like protein (RBPJL), found in Homo sapiens (Human).